Reading from the N-terminus, the 325-residue chain is Neural proliferation differentiation and control protein 1 (325 aa).

The first 34 residues, 1–34 (MATPLPPPSPRHLRLLRLLLSGLVLGAALRGAAA), serve as a signal peptide directing secretion. A disordered region spans residues 138–175 (QGLELGLPSTPGTPTPTPHTSLGSPVSSDPVHMSPLEP). The chain crosses the membrane as a helical span at residues 182-202 (GLALVLILAFCVAGAAALSVA). A Phosphoserine modification is found at S229. A disordered region spans residues 266 to 290 (EPPKELDTASSDEENEDGDFTVYEC). A compositionally biased stretch (acidic residues) spans 275 to 284 (SSDEENEDGD).

This sequence belongs to the NPDC1/cab-1 family. In terms of tissue distribution, strongly expressed in adult brain; especially in hippocampus, frontal lobe and temporal lobe.

The protein resides in the membrane. Suppresses oncogenic transformation in neural and non-neural cells and down-regulates neural cell proliferation. Might be involved in transcriptional regulation. This Homo sapiens (Human) protein is Neural proliferation differentiation and control protein 1 (NPDC1).